Reading from the N-terminus, the 153-residue chain is Endoribonuclease YbeY (153 aa).

Zn(2+)-binding residues include histidine 118, histidine 122, and histidine 128.

It belongs to the endoribonuclease YbeY family. The cofactor is Zn(2+).

It is found in the cytoplasm. Single strand-specific metallo-endoribonuclease involved in late-stage 70S ribosome quality control and in maturation of the 3' terminus of the 16S rRNA. The chain is Endoribonuclease YbeY from Staphylococcus haemolyticus (strain JCSC1435).